A 216-amino-acid polypeptide reads, in one-letter code: Ribose-5-phosphate isomerase A (216 aa).

Residues 26 to 29, 79 to 82, and 92 to 95 contribute to the substrate site; these read TGST, DGAD, and KGGG. Glutamate 101 serves as the catalytic Proton acceptor. Residue lysine 119 participates in substrate binding.

The protein belongs to the ribose 5-phosphate isomerase family. As to quaternary structure, homodimer.

The catalysed reaction is aldehydo-D-ribose 5-phosphate = D-ribulose 5-phosphate. It functions in the pathway carbohydrate degradation; pentose phosphate pathway; D-ribose 5-phosphate from D-ribulose 5-phosphate (non-oxidative stage): step 1/1. Functionally, catalyzes the reversible conversion of ribose-5-phosphate to ribulose 5-phosphate. This chain is Ribose-5-phosphate isomerase A, found in Legionella pneumophila (strain Paris).